The sequence spans 503 residues: Putative ribose/galactose/methyl galactoside import ATP-binding protein (503 aa).

ABC transporter domains are found at residues 7 to 244 and 254 to 498; these read LEMI…VGRE and VPIG…TGQL. 39–46 is an ATP binding site; that stretch reads GENGAGKS.

The protein belongs to the ABC transporter superfamily. Carbohydrate importer 2 (CUT2) (TC 3.A.1.2) family.

Its subcellular location is the cell membrane. The catalysed reaction is D-ribose(out) + ATP + H2O = D-ribose(in) + ADP + phosphate + H(+). It catalyses the reaction D-galactose(out) + ATP + H2O = D-galactose(in) + ADP + phosphate + H(+). Functionally, part of an ABC transporter complex involved in carbohydrate import. Could be involved in ribose, galactose and/or methyl galactoside import. Responsible for energy coupling to the transport system. This is Putative ribose/galactose/methyl galactoside import ATP-binding protein from Geobacillus kaustophilus (strain HTA426).